The sequence spans 381 residues: Guanine nucleotide-binding protein G(olf) subunit alpha (381 aa).

Residues Met1 to Asn25 form a disordered region. Gly2 is lipidated: N-palmitoyl glycine. The S-palmitoyl cysteine moiety is linked to residue Cys3. Basic and acidic residues predominate over residues Thr10 to Asn25. One can recognise a G-alpha domain in the interval Ala41–Leu381. A G1 motif region spans residues Arg44–Thr57. Residues Glu52, Ser53, Gly54, Lys55, Ser56, and Thr57 each contribute to the GTP site. Ser56 provides a ligand contact to Mg(2+). A Phosphothreonine modification is found at Thr178. Residues Asp183 to Thr191 form a G2 motif region. The GTP site is built by Leu185 and Arg186. Arg188 carries the ADP-ribosylarginine; by cholera toxin modification. Thr191 is a GTP binding site. Mg(2+) contacts are provided by Thr191 and Asp210. Residues Phe206 to Arg215 are G3 motif. GTP is bound by residues Gly213, Asn279, Lys280, Asp282, and Ala353. The segment at Ile275–Asp282 is G4 motif. A G5 motif region spans residues Thr351–Thr356.

Belongs to the G-alpha family. G(s) subfamily. G proteins are composed of 3 units; alpha, beta and gamma. The alpha chain contains the guanine nucleotide binding site. Interacts with GAS2L2. Interacts (GDP-bound form) with RIC8B (via C-terminus); promoting GNAL folding and association with the plasma membrane. As to expression, detected in olfactory neuroepithelium, brain, testis, and to a lower extent in retina, lung alveoli, spleen. Trace amounts where seen in kidney, adrenal gland and liver. Found to be expressed in all the insulinomas examined.

The protein localises to the cell membrane. The enzyme catalyses GTP + H2O = GDP + phosphate + H(+). Functionally, guanine nucleotide-binding protein (G protein) involved as transducer in olfactory signal transduction controlled by G protein-coupled receptors (GPCRs). Contains the guanine nucleotide binding site and alternates between an active, GTP-bound state and an inactive, GDP-bound state. Signaling by an activated GPCR promotes GDP release and GTP binding. The alpha subunit has a low GTPase activity that converts bound GTP to GDP, thereby terminating the signal. Both GDP release and GTP hydrolysis are modulated by numerous regulatory proteins. GNAL/G(olf) alpha specifically mediates olfactory signal transduction within the olfactory neuroepithelium and the basal ganglia following GPCRs activation. Acts by promoting the specific activation of adenylyl cyclase ADCY3, resulting in increased levels of the signaling molecule cAMP. This chain is Guanine nucleotide-binding protein G(olf) subunit alpha, found in Homo sapiens (Human).